The chain runs to 118 residues: MSRRVKKLNQLFRADISALLQKEVRDPRLDTLLSVNEVDVSEDMRHATVYVSHLAGDEHKDEILAALNAAAGFFRTEIAKKTDIRYMPVFNFIWDDTIERGVRLNTLIDRVTQHQPED.

It belongs to the RbfA family. Monomer. Binds 30S ribosomal subunits, but not 50S ribosomal subunits or 70S ribosomes.

The protein resides in the cytoplasm. One of several proteins that assist in the late maturation steps of the functional core of the 30S ribosomal subunit. Associates with free 30S ribosomal subunits (but not with 30S subunits that are part of 70S ribosomes or polysomes). Required for efficient processing of 16S rRNA. May interact with the 5'-terminal helix region of 16S rRNA. This is Ribosome-binding factor A from Dehalococcoides mccartyi (strain ATCC BAA-2266 / KCTC 15142 / 195) (Dehalococcoides ethenogenes (strain 195)).